A 222-amino-acid polypeptide reads, in one-letter code: MDRTICPFFIQSFTMSTALKRLIPFLVPFVVFLVAAALGGLAADQPENHQALAEPVTGVGEAGVSPVNEAGESYSSATSGVQEATAPGAVLLDAIDAESDKVDNQAEGGERMKKVEEELSLLRRELYDRTDRPGLKRAVILSLATSAAIGGRMVSRTLRDNIPGYFVVINAILAAYYIRKVLTYRRRVMTKRQPFMSSVKNFFRRKPKDEGAGVDKASKKQT.

2 consecutive transmembrane segments (helical) span residues 22–42 (LIPF…GGLA) and 162–182 (IPGY…RKVL). The Prevents secretion from ER signature appears at 219–222 (KKQT).

In terms of assembly, homodimer. Interacts (via N-terminus) with human host CAMLG (via N-terminus).

The protein localises to the cytoplasm. It is found in the host endoplasmic reticulum. Its subcellular location is the parasitophorous vacuole membrane. In terms of biological role, direct host-parasite interaction occurs at the cytoplasmic faces of the parasitophorous vacuole membrane (PVM) and the host endoplasmic reticulum (ER) membrane via GRA3 and host CAMLG association. Direct insertion of GRA3 ER retrieval motif into the host ER membrane contributes to the host ER recruitment to the PVM. The polypeptide is Dense granule protein 3 (Toxoplasma gondii).